The primary structure comprises 482 residues: Isoxanthopterin deaminase (482 aa).

Residues His74 and His76 each coordinate Zn(2+). Gln79 is a binding site for substrate. Position 246 (His246) interacts with Zn(2+). Positions 249 and 283 each coordinate substrate. Residues His283 and Asp334 each coordinate Zn(2+).

Belongs to the metallo-dependent hydrolases superfamily. ATZ/TRZ family. It depends on Zn(2+) as a cofactor.

It carries out the reaction a 2-amino-4-hydroxypteridine + H2O + H(+) = a 2,4-dihydroxypteridine + NH4(+). The polypeptide is Isoxanthopterin deaminase (Unknown prokaryotic organism).